The following is a 536-amino-acid chain: Fanconi anemia group E protein (536 aa).

The interaction with FANCC stretch occupies residues 150–371 (MEGASPLSER…VLTRSLFLGR (222 aa)). A disordered region spans residues 171 to 252 (LGLGGRRLKS…ADGGSASPIK (82 aa)). Over residues 230 to 239 (EKERPEHKSL) the composition is skewed to basic and acidic residues. Position 249 is a phosphoserine (Ser-249). Thr-346 bears the Phosphothreonine; by CHEK1 mark. Residue Ser-374 is modified to Phosphoserine; by CHEK1.

Belongs to the multisubunit FA complex composed of FANCA, FANCB, FANCC, FANCE, FANCF, FANCG, FANCL/PHF9 and FANCM. The complex is not found in FA patients. Interacts with FANCC and FANCD2. Post-translationally, phosphorylated. Phosphorylation by CHEK1 at Thr-346 and Ser-374 regulates its function in DNA cross-links repair. Ubiquitinated. Phosphorylation by CHEK1 induces polyubiquitination and degradation.

It localises to the nucleus. As part of the Fanconi anemia (FA) complex functions in DNA cross-links repair. Required for the nuclear accumulation of FANCC and provides a critical bridge between the FA complex and FANCD2. This is Fanconi anemia group E protein (FANCE) from Homo sapiens (Human).